Here is a 248-residue protein sequence, read N- to C-terminus: Triosephosphate isomerase B (248 aa).

Substrate contacts are provided by asparagine 11 and lysine 13. The active-site Electrophile is histidine 95. The active-site Proton acceptor is the glutamate 165.

Belongs to the triosephosphate isomerase family. Homodimer.

It is found in the cytoplasm. The enzyme catalyses dihydroxyacetone phosphate = methylglyoxal + phosphate. It carries out the reaction D-glyceraldehyde 3-phosphate = dihydroxyacetone phosphate. The protein operates within carbohydrate degradation; glycolysis; D-glyceraldehyde 3-phosphate from glycerone phosphate: step 1/1. It functions in the pathway carbohydrate biosynthesis; gluconeogenesis. Triosephosphate isomerase is an extremely efficient metabolic enzyme that catalyzes the interconversion between dihydroxyacetone phosphate (DHAP) and D-glyceraldehyde-3-phosphate (G3P) in glycolysis and gluconeogenesis. Its function is as follows. It is also responsible for the non-negligible production of methylglyoxal a reactive cytotoxic side-product that modifies and can alter proteins, DNA and lipids. This chain is Triosephosphate isomerase B (tpi1b), found in Danio rerio (Zebrafish).